The sequence spans 538 residues: Probable folate-biopterin transporter 9, chloroplastic (538 aa).

The N-terminal 57 residues, 1–57, are a transit peptide targeting the chloroplast; the sequence is MNNPLLSISNPVKFFKPPIPYRISLNTTINKKQKHQSKTLVVKSNKRSTTSLTSSVS. 12 helical membrane passes run 85 to 105, 129 to 149, 152 to 172, 178 to 198, 220 to 240, 246 to 266, 309 to 329, 339 to 359, 370 to 390, 395 to 415, 447 to 467, and 479 to 499; these read VLLCALGYWVQGLRCFSWLAL, LPMVAKPLYGVLSDVLYIGGA, VPYISVGVLLQGLAWGSLAIF, VLPSLMAFILLSNLGASITEV, ALMASAVGGILGNLLGGYCLL, ILFLAFTALLSLQLIVSLSSK, LIWIVSSIALVPLLSGSVFCY, SVIGMSKVIGQLMLLCLTVVY, ALIHIVQLLYAFSLLFDYILV, LAFGISNTAFVLCFSSVAEIL, LCLSSVVSGFTGVGMANMIGI, and ILIQSLAALVPLWFIHYVPML.

Belongs to the major facilitator superfamily. Folate-biopterin transporter (TC 2.A.71) family.

It localises to the plastid. The protein localises to the chloroplast membrane. Could mediate folate transport. In Arabidopsis thaliana (Mouse-ear cress), this protein is Probable folate-biopterin transporter 9, chloroplastic.